The sequence spans 395 residues: RNA demethylase ALKBH5 (395 aa).

Disordered stretches follow at residues 1-28 and 47-83; these read MAAA…AGSR and AAEP…EEEA. The residue at position 2 (alanine 2) is an N-acetylalanine. Residue lysine 58 forms a Glycyl lysine isopeptide (Lys-Gly) (interchain with G-Cter in ubiquitin) linkage. Residues 60 to 83 show a composition bias toward basic and acidic residues; sequence KYQEDSDPERSDYEEHQLQKEEEA. Serine 65 and serine 70 each carry phosphoserine. Residues 68 to 117 are a coiled coil; that stretch reads ERSDYEEHQLQKEEEARKVKSGIRQIRLFSQDECSKIEARIDEVVSRAEK. Tyrosine 72 is modified (phosphotyrosine). Lysine 87 participates in a covalent cross-link: Glycyl lysine isopeptide (Lys-Gly) (interchain with G-Cter in SUMO1). At serine 88 the chain carries Phosphoserine. Lysine 133 bears the N6-acetyllysine mark. Tyrosine 140 is an active-site residue. Residues asparagine 194, tyrosine 196, and histidine 205 each coordinate 2-oxoglutarate. Cysteine 231 and cysteine 268 are joined by a disulfide. Lysine 236 carries the N6-acetyllysine modification. 2-oxoglutarate is bound by residues histidine 267 and arginine 278. The interval 294–395 is disordered; the sequence is ETKSLSSSTL…PTRKVKMRRH (102 aa). Low complexity predominate over residues 296-306; the sequence is KSLSSSTLPPS. Lysine 322 is covalently cross-linked (Glycyl lysine isopeptide (Lys-Gly) (interchain with G-Cter in SUMO1)). Residue serine 326 is modified to Phosphoserine. A Glycyl lysine isopeptide (Lys-Gly) (interchain with G-Cter in SUMO2) cross-link involves residue lysine 329. Residues 329 to 350 are compositionally biased toward basic and acidic residues; it reads KADPDAAHRPRILEMDKEENRR. Position 360 is an omega-N-methylarginine (arginine 360). Serine 362, serine 372, serine 375, and serine 385 each carry phosphoserine.

It belongs to the alkB family. In terms of assembly, monomer. Interacts with RBM33; promoting desumoylation by SENP1 and recruitment to N(6)-methyladenosine-containing mRNAs. Interacts (when acetylated by KAT8) with PSPC1; interaction facilitates recognition of N(6)-methyladenosine (m6A) mRNA. It depends on Fe(2+) as a cofactor. In terms of processing, phosphorylated at Ser-88 and Ser-326 in response to reactive oxygen species (ROS), promoting sumoylation and inactivation. Acetylated by KAT8 at Lys-236, promoting interaction with PSPC1, thereby facilitating recognition of N(6)-methyladenosine (m6A) mRNA by ALKBH5. Deacetylated at Lys-236 by HDAC7. Post-translationally, sumoylated at Lys-87 and Lys-322 by PIAS4 following phosphorylation at Ser-88 and Ser-326 in response to reactive oxygen species (ROS), inhibiting the RNA demethylase activity. Desumoylated by SENP1; relieving RNA demethylase inhibition, leading to N(6)-methyladenosine-containing mRNAs demethylation. In terms of processing, ubiquitinated at Lys-58 via 'Lys-48'-linked polyubiquitin chain, leading to its degradation by the proteasome. Deubiquitinated at Lys-58 by USP9X, promoting its stabilizazion.

Its subcellular location is the nucleus speckle. It carries out the reaction an N(6)-methyladenosine in mRNA + 2-oxoglutarate + O2 = an adenosine in mRNA + formaldehyde + succinate + CO2. Its activity is regulated as follows. RNA demethylase activity is inhibited following sumoylation. Inhibition is relieved following desumoylation. Functionally, dioxygenase that specifically demethylates N(6)-methyladenosine (m6A) RNA, the most prevalent internal modification of messenger RNA (mRNA) in higher eukaryotes. Demethylates RNA by oxidative demethylation, which requires molecular oxygen, alpha-ketoglutarate and iron. Demethylation of m6A mRNA affects mRNA processing, translation and export. Can also demethylate N(6)-methyladenosine in single-stranded DNA (in vitro). Required for the late meiotic and haploid phases of spermatogenesis by mediating m6A demethylation in spermatocytes and round spermatids: m6A demethylation of target transcripts is required for correct splicing and the production of longer 3'-UTR mRNAs in male germ cells. Involved in paraspeckle assembly, a nuclear membraneless organelle, by undergoing liquid-liquid phase separation. Paraspeckle assembly is coupled with m6A demethylation of RNAs, such as NEAT1 non-coding RNA. Also acts as a negative regulator of T-cell development: inhibits gamma-delta T-cell proliferation via demethylation of JAG1 and NOTCH2 transcripts. Inhibits regulatory T-cell (Treg) recruitment by mediating demethylation and destabilization of CCL28 mRNAs. The protein is RNA demethylase ALKBH5 (Alkbh5) of Rattus norvegicus (Rat).